A 338-amino-acid chain; its full sequence is CRISPR-associated endonuclease Cas1 (338 aa).

Mn(2+)-binding residues include Glu155, His220, and Glu235.

It belongs to the CRISPR-associated endonuclease Cas1 family. As to quaternary structure, homodimer, forms a heterotetramer with a Cas2 homodimer. The cofactor is Mg(2+). Requires Mn(2+) as cofactor.

In terms of biological role, CRISPR (clustered regularly interspaced short palindromic repeat), is an adaptive immune system that provides protection against mobile genetic elements (viruses, transposable elements and conjugative plasmids). CRISPR clusters contain spacers, sequences complementary to antecedent mobile elements, and target invading nucleic acids. CRISPR clusters are transcribed and processed into CRISPR RNA (crRNA). Acts as a dsDNA endonuclease. Involved in the integration of spacer DNA into the CRISPR cassette. The type III-A Csm effector complex binds crRNA and acts as a crRNA-guided RNase, DNase and cyclic oligoadenylate synthase; binding of target RNA cognate to the crRNA is required for all activities. This chain is CRISPR-associated endonuclease Cas1, found in Mycobacterium tuberculosis (strain CDC 1551 / Oshkosh).